The sequence spans 344 residues: Heat-inducible transcription repressor HrcA (344 aa).

Belongs to the HrcA family.

Functionally, negative regulator of class I heat shock genes (grpE-dnaK-dnaJ and groELS operons). Prevents heat-shock induction of these operons. This Streptococcus agalactiae serotype Ia (strain ATCC 27591 / A909 / CDC SS700) protein is Heat-inducible transcription repressor HrcA.